A 335-amino-acid chain; its full sequence is Cytoskeleton protein RodZ (335 aa).

Residues 1-111 (MNTEATHDQN…LGKRRKKRDG (111 aa)) lie on the Cytoplasmic side of the membrane. An HTH cro/C1-type domain is found at 19-71 (LRNAREQLGLSQQAVAERLCLKVSTVRDIEEDKAPADLASTFLRGYIRSYARL). A DNA-binding region (H-T-H motif) is located at residues 30 to 49 (QQAVAERLCLKVSTVRDIEE). Residues 112–132 (WLMTFTWLVLFVVIGLSGAWW) form a helical; Signal-anchor for type II membrane protein membrane-spanning segment. Topologically, residues 133 to 335 (WQDHKAQQEE…TLNAEQSPAQ (203 aa)) are periplasmic. Over residues 148–164 (DQSSAELNNNQSQSVPL) the composition is skewed to polar residues. Residues 148 to 244 (DQSSAELNNN…PLPTDQAGVT (97 aa)) are disordered. Low complexity-rich tracts occupy residues 165 to 205 (DTST…DPQQ) and 217 to 239 (DTAATPAPAATTTPDGAAPLPTD).

Belongs to the RodZ family.

It is found in the cell inner membrane. Its function is as follows. Cytoskeletal protein that is involved in cell-shape control through regulation of the length of the long axis. In Escherichia coli O6:H1 (strain CFT073 / ATCC 700928 / UPEC), this protein is Cytoskeleton protein RodZ.